Reading from the N-terminus, the 452-residue chain is Adenosylmethionine-8-amino-7-oxononanoate aminotransferase (452 aa).

116–117 (GS) is a pyridoxal 5'-phosphate binding site. Residue Tyr-152 coordinates substrate. Residue Asp-257 coordinates pyridoxal 5'-phosphate. Substrate contacts are provided by Lys-286, Gly-321, and Arg-414. Lys-286 carries the N6-(pyridoxal phosphate)lysine modification.

Belongs to the class-III pyridoxal-phosphate-dependent aminotransferase family. BioA subfamily. As to quaternary structure, homodimer. Requires pyridoxal 5'-phosphate as cofactor.

The protein localises to the cytoplasm. It catalyses the reaction (8S)-8-amino-7-oxononanoate + S-adenosyl-L-methionine = S-adenosyl-4-methylsulfanyl-2-oxobutanoate + (7R,8S)-7,8-diammoniononanoate. It participates in cofactor biosynthesis; biotin biosynthesis; 7,8-diaminononanoate from 8-amino-7-oxononanoate (SAM route): step 1/1. In terms of biological role, catalyzes the transfer of the alpha-amino group from S-adenosyl-L-methionine (SAM) to 7-keto-8-aminopelargonic acid (KAPA) to form 7,8-diaminopelargonic acid (DAPA). It is the only aminotransferase known to utilize SAM as an amino donor. The sequence is that of Adenosylmethionine-8-amino-7-oxononanoate aminotransferase from Staphylococcus aureus (strain NCTC 8325 / PS 47).